The primary structure comprises 154 residues: 3-dehydroquinate dehydratase (154 aa).

Residue tyrosine 26 is the Proton acceptor of the active site. Residues asparagine 77, histidine 83, and aspartate 90 each coordinate substrate. The active-site Proton donor is the histidine 103. Residues 104–105 (IS) and arginine 114 each bind substrate.

This sequence belongs to the type-II 3-dehydroquinase family. In terms of assembly, homododecamer.

It catalyses the reaction 3-dehydroquinate = 3-dehydroshikimate + H2O. Its pathway is metabolic intermediate biosynthesis; chorismate biosynthesis; chorismate from D-erythrose 4-phosphate and phosphoenolpyruvate: step 3/7. Functionally, catalyzes a trans-dehydration via an enolate intermediate. The protein is 3-dehydroquinate dehydratase of Buchnera aphidicola subsp. Baizongia pistaciae (strain Bp).